A 556-amino-acid polypeptide reads, in one-letter code: Urocanate hydratase (556 aa).

Residues 52 to 53 (GG), Gln-130, 176 to 178 (GMG), Glu-196, Arg-201, 242 to 243 (NA), 263 to 267 (QTSAH), 273 to 274 (YL), and Tyr-322 each bind NAD(+). The active site involves Cys-410. Residue Gly-492 coordinates NAD(+).

It belongs to the urocanase family. The cofactor is NAD(+).

The protein resides in the cytoplasm. The catalysed reaction is 4-imidazolone-5-propanoate = trans-urocanate + H2O. The protein operates within amino-acid degradation; L-histidine degradation into L-glutamate; N-formimidoyl-L-glutamate from L-histidine: step 2/3. Functionally, catalyzes the conversion of urocanate to 4-imidazolone-5-propionate. In Bradyrhizobium sp. (strain ORS 278), this protein is Urocanate hydratase.